Consider the following 296-residue polypeptide: Glycine--tRNA ligase alpha subunit (296 aa).

It belongs to the class-II aminoacyl-tRNA synthetase family. As to quaternary structure, tetramer of two alpha and two beta subunits.

The protein localises to the cytoplasm. The catalysed reaction is tRNA(Gly) + glycine + ATP = glycyl-tRNA(Gly) + AMP + diphosphate. The chain is Glycine--tRNA ligase alpha subunit from Maricaulis maris (strain MCS10) (Caulobacter maris).